Consider the following 201-residue polypeptide: Probable GTP-binding protein EngB (201 aa).

The EngB-type G domain occupies serine 22–tyrosine 195. GTP contacts are provided by residues glycine 30–serine 37, glycine 57–threonine 61, aspartate 75–glycine 78, threonine 142–aspartate 145, and tyrosine 174–serine 176. Mg(2+) is bound by residues serine 37 and threonine 59.

It belongs to the TRAFAC class TrmE-Era-EngA-EngB-Septin-like GTPase superfamily. EngB GTPase family. Mg(2+) is required as a cofactor.

Functionally, necessary for normal cell division and for the maintenance of normal septation. This is Probable GTP-binding protein EngB from Finegoldia magna (strain ATCC 29328 / DSM 20472 / WAL 2508) (Peptostreptococcus magnus).